The primary structure comprises 64 residues: Large ribosomal subunit protein uL29 (64 aa).

The protein belongs to the universal ribosomal protein uL29 family.

This chain is Large ribosomal subunit protein uL29, found in Thiobacillus denitrificans (strain ATCC 25259 / T1).